We begin with the raw amino-acid sequence, 154 residues long: Crossover junction endodeoxyribonuclease RuvC (154 aa).

Active-site residues include aspartate 7, glutamate 67, and aspartate 139. Mg(2+) contacts are provided by aspartate 7, glutamate 67, and aspartate 139.

It belongs to the RuvC family. Homodimer which binds Holliday junction (HJ) DNA. The HJ becomes 2-fold symmetrical on binding to RuvC with unstacked arms; it has a different conformation from HJ DNA in complex with RuvA. In the full resolvosome a probable DNA-RuvA(4)-RuvB(12)-RuvC(2) complex forms which resolves the HJ. It depends on Mg(2+) as a cofactor.

It is found in the cytoplasm. The catalysed reaction is Endonucleolytic cleavage at a junction such as a reciprocal single-stranded crossover between two homologous DNA duplexes (Holliday junction).. Its function is as follows. The RuvA-RuvB-RuvC complex processes Holliday junction (HJ) DNA during genetic recombination and DNA repair. Endonuclease that resolves HJ intermediates. Cleaves cruciform DNA by making single-stranded nicks across the HJ at symmetrical positions within the homologous arms, yielding a 5'-phosphate and a 3'-hydroxyl group; requires a central core of homology in the junction. The consensus cleavage sequence is 5'-(A/T)TT(C/G)-3'. Cleavage occurs on the 3'-side of the TT dinucleotide at the point of strand exchange. HJ branch migration catalyzed by RuvA-RuvB allows RuvC to scan DNA until it finds its consensus sequence, where it cleaves and resolves the cruciform DNA. The protein is Crossover junction endodeoxyribonuclease RuvC of Parasynechococcus marenigrum (strain WH8102).